The sequence spans 370 residues: Galactose-1-phosphate uridylyltransferase (370 aa).

Cysteine 51 and cysteine 54 together coordinate Zn(2+). UDP-alpha-D-glucose contacts are provided by residues alanine 60 and 76-77; that span reads NG. Histidine 121 is a binding site for Zn(2+). Asparagine 166 provides a ligand contact to UDP-alpha-D-glucose. Position 177 (histidine 177) interacts with Zn(2+). Histidine 179 acts as the Tele-UMP-histidine intermediate in catalysis. Residue glutamine 181 participates in UDP-alpha-D-glucose binding. Residues glutamate 195, histidine 294, histidine 311, and histidine 313 each contribute to the Fe cation site. UDP-alpha-D-glucose contacts are provided by residues 326–329 and 331–332; these read KFLV and FE.

It belongs to the galactose-1-phosphate uridylyltransferase type 1 family. In terms of assembly, homodimer. Zn(2+) is required as a cofactor.

The catalysed reaction is alpha-D-galactose 1-phosphate + UDP-alpha-D-glucose = alpha-D-glucose 1-phosphate + UDP-alpha-D-galactose. It participates in carbohydrate metabolism; galactose metabolism. The polypeptide is Galactose-1-phosphate uridylyltransferase (GAL7) (Kluyveromyces lactis (strain ATCC 8585 / CBS 2359 / DSM 70799 / NBRC 1267 / NRRL Y-1140 / WM37) (Yeast)).